Consider the following 386-residue polypeptide: Succinate--CoA ligase [ADP-forming] subunit beta (386 aa).

ATP contacts are provided by residues lysine 46, 53-55, glutamate 99, alanine 102, and glutamate 107; that span reads GRG. 2 residues coordinate Mg(2+): asparagine 199 and aspartate 213. Substrate-binding positions include asparagine 264 and 321 to 323; that span reads GIV.

Belongs to the succinate/malate CoA ligase beta subunit family. Heterotetramer of two alpha and two beta subunits. The cofactor is Mg(2+).

The enzyme catalyses succinate + ATP + CoA = succinyl-CoA + ADP + phosphate. The catalysed reaction is GTP + succinate + CoA = succinyl-CoA + GDP + phosphate. It functions in the pathway carbohydrate metabolism; tricarboxylic acid cycle; succinate from succinyl-CoA (ligase route): step 1/1. Its function is as follows. Succinyl-CoA synthetase functions in the citric acid cycle (TCA), coupling the hydrolysis of succinyl-CoA to the synthesis of either ATP or GTP and thus represents the only step of substrate-level phosphorylation in the TCA. The beta subunit provides nucleotide specificity of the enzyme and binds the substrate succinate, while the binding sites for coenzyme A and phosphate are found in the alpha subunit. In Actinobacillus succinogenes (strain ATCC 55618 / DSM 22257 / CCUG 43843 / 130Z), this protein is Succinate--CoA ligase [ADP-forming] subunit beta.